Consider the following 499-residue polypeptide: GTPase Der (499 aa).

EngA-type G domains lie at 3 to 166 and 211 to 384; these read PVVA…MDEV and IKLA…DCST. GTP-binding positions include 9–16, 56–60, 118–121, 217–224, 264–268, and 329–332; these read GRPNVGKS, DTGGI, NKTD, DTAGV, and NKWD. One can recognise a KH-like domain in the interval 385-469; the sequence is RRVNTSMLTR…PIRIQFKEGD (85 aa).

Belongs to the TRAFAC class TrmE-Era-EngA-EngB-Septin-like GTPase superfamily. EngA (Der) GTPase family. In terms of assembly, associates with the 50S ribosomal subunit.

GTPase that plays an essential role in the late steps of ribosome biogenesis. The protein is GTPase Der of Erwinia tasmaniensis (strain DSM 17950 / CFBP 7177 / CIP 109463 / NCPPB 4357 / Et1/99).